Reading from the N-terminus, the 252-residue chain is Triosephosphate isomerase (252 aa).

Residue 11–13 coordinates substrate; that stretch reads NWK. Histidine 97 functions as the Electrophile in the catalytic mechanism. Glutamate 169 acts as the Proton acceptor in catalysis. Residues glycine 175, serine 215, and 236-237 contribute to the substrate site; that span reads GG.

Belongs to the triosephosphate isomerase family. In terms of assembly, homodimer.

It localises to the cytoplasm. It catalyses the reaction D-glyceraldehyde 3-phosphate = dihydroxyacetone phosphate. It functions in the pathway carbohydrate biosynthesis; gluconeogenesis. The protein operates within carbohydrate degradation; glycolysis; D-glyceraldehyde 3-phosphate from glycerone phosphate: step 1/1. In terms of biological role, involved in the gluconeogenesis. Catalyzes stereospecifically the conversion of dihydroxyacetone phosphate (DHAP) to D-glyceraldehyde-3-phosphate (G3P). The protein is Triosephosphate isomerase of Mycoplasmoides gallisepticum (strain R(low / passage 15 / clone 2)) (Mycoplasma gallisepticum).